We begin with the raw amino-acid sequence, 530 residues long: Na(+)/H(+) antiporter NhaB (530 aa).

13 helical membrane passes run 13-33, 34-54, 64-84, 90-110, 113-133, 136-156, 205-225, 234-254, 306-326, 351-371, 378-400, 450-470, and 481-501; these read FLGKAPDWYKITIISFLIINP, FVFFLVDPFVAGWLLVVEFIF, PLQPGGLLAIEAVAIGMTSPA, LVANIEVLLLLIFMVAGIYFM, LLLYIFTKILIGIRSKVLLSL, CLMAAFLSAFLDALTVIAVVI, LLMHAGIGTALGGVMTMVGEP, AGWLFGEFIIRMSPVTVPVFM, ALIAVWLIVGLAMHLAAVGLI, EEALPFTALLAVFFSIVAVII, PIISWVLTLNGNAQMTMFYIANG, ATPNGQAAFLFVLTSALAPLI, and ALPYTIVLALVGLAGIEFMLL.

This sequence belongs to the NhaB Na(+)/H(+) (TC 2.A.34) antiporter family.

It is found in the cell inner membrane. It catalyses the reaction 2 Na(+)(in) + 3 H(+)(out) = 2 Na(+)(out) + 3 H(+)(in). Na(+)/H(+) antiporter that extrudes sodium in exchange for external protons. The polypeptide is Na(+)/H(+) antiporter NhaB (Photobacterium profundum (strain SS9)).